Here is a 352-residue protein sequence, read N- to C-terminus: MRPLNVQIRLGNLRHNYRILKEMHGGKLLAVVKADAYGHGAVRCAFALADLADGFAVATIDEGIRLRESGITHPIVLLEGVFEASEYEAVEQYSLWPAVGNQWQLEALLIRHWKKTVKVWLKMDSGMHRTGFFPHDYASAYAALKQSEYVDSIVKFSHFSCADEPESGMTEIQMEAFDLGTEGLEGEESLANSAAILNVPEARRDWGRAGLALYGISPFGGGDDRLKPVMRLSTRIFGERVLQPHSPIGYGATFYTSKSTRVGLIACGYADGYPRRAPSNSPVAVDGKLTRVIGRVSMDMMTIELDASQEGLGHEVELWGDTVNINTVAEAAGTIPYELMCNIKRAKFTYIE.

The active-site Proton acceptor; specific for D-alanine is the lysine 33. Residue lysine 33 is modified to N6-(pyridoxal phosphate)lysine. Arginine 129 contacts substrate. Tyrosine 250 (proton acceptor; specific for L-alanine) is an active-site residue. Methionine 298 contributes to the substrate binding site.

It belongs to the alanine racemase family. The cofactor is pyridoxal 5'-phosphate.

The catalysed reaction is L-alanine = D-alanine. Its pathway is amino-acid biosynthesis; D-alanine biosynthesis; D-alanine from L-alanine: step 1/1. Its function is as follows. Catalyzes the interconversion of L-alanine and D-alanine. May also act on other amino acids. The sequence is that of Alanine racemase (alr) from Neisseria meningitidis serogroup B (strain ATCC BAA-335 / MC58).